A 346-amino-acid polypeptide reads, in one-letter code: Histone PARylation factor 1 (346 aa).

Met-1 bears the N-acetylmethionine mark. Residues Lys-19, Lys-186, and Lys-233 each carry the N6-acetyllysine modification. At Asp-235 the chain carries PolyADP-ribosyl aspartic acid. Tyr-238 bears the ADP-ribosyltyrosine mark. Glu-240 carries the polyADP-ribosyl glutamic acid modification. Residues 242 to 346 form an interaction with PARP1 region; the sequence is PETDADLKRI…SEENIDQLAG (105 aa). Glu-284 (proton donor) is an active-site residue.

This sequence belongs to the HPF1 family. Interacts with PARP1 (via the PARP catalytic domain). Interacts with PARP2 (via the PARP catalytic domain). Interacts with core nucleosomes in a PARP1- and PARP2-dependent manner.

It localises to the chromosome. The protein resides in the nucleus. Functionally, cofactor for serine ADP-ribosylation that confers serine specificity on PARP1 and PARP2 and plays a key role in DNA damage response. Initiates the repair of double-strand DNA breaks: recruited to DNA damage sites by PARP1 and PARP2 and switches the amino acid specificity of PARP1 and PARP2 from aspartate or glutamate to serine residues, licensing serine ADP-ribosylation of target proteins. Serine ADP-ribosylation of target proteins, such as histones, promotes decompaction of chromatin and the recruitment of repair factors leading to the reparation of DNA strand breaks. Serine ADP-ribosylation of proteins constitutes the primary form of ADP-ribosylation of proteins in response to DNA damage. HPF1 acts by completing the active site of PARP1 and PARP2: forms a composite active site composed of residues from HPF1 and PARP1 or PARP2. While HPF1 promotes the initiation of serine ADP-ribosylation, it restricts the polymerase activity of PARP1 and PARP2 in order to limit the length of poly-ADP-ribose chains. HPF1 also promotes tyrosine ADP-ribosylation, probably by conferring tyrosine specificity on PARP1. The protein is Histone PARylation factor 1 of Mus musculus (Mouse).